A 248-amino-acid polypeptide reads, in one-letter code: Tyrosine recombinase XerD-like (248 aa).

One can recognise a Core-binding (CB) domain in the interval 1–72 (MKSYIEPFIA…TANQFLYYLY (72 aa)). The 164-residue stretch at 85-248 (DTMKVMRTEK…PVTLEKYYKS (164 aa)) folds into the Tyr recombinase domain. Residues Lys149 and Arg213 contribute to the active site. The active-site O-(3'-phospho-DNA)-tyrosine intermediate is Tyr245.

This sequence belongs to the 'phage' integrase family. XerD-like subfamily.

Its subcellular location is the cytoplasm. Functionally, putative tyrosine recombinase. Not involved in the cutting and rejoining of the recombining DNA molecules on dif(SL) site. This chain is Tyrosine recombinase XerD-like, found in Streptococcus pyogenes serotype M4 (strain MGAS10750).